The primary structure comprises 307 residues: CRISPR-associated endonuclease Cas1 2 (307 aa).

Mn(2+)-binding residues include E142, H206, and E221.

Belongs to the CRISPR-associated endonuclease Cas1 family. In terms of assembly, homodimer, forms a heterotetramer with a Cas2 homodimer. Forms oligomers, probably binds nucleic acids as a homodimer. Mg(2+) serves as cofactor. The cofactor is Mn(2+).

Functionally, CRISPR (clustered regularly interspaced short palindromic repeat), is an adaptive immune system that provides protection against mobile genetic elements (viruses, transposable elements and conjugative plasmids). CRISPR clusters contain spacers, sequences complementary to antecedent mobile elements, and target invading nucleic acids. CRISPR clusters are transcribed and processed into CRISPR RNA (crRNA). Acts as a dsDNA endonuclease. Involved in the integration of spacer DNA into the CRISPR cassette. In vitro catalyzes a concerted transesterification reaction on branched DNA, as would be expected during integration of protospacers into the CRISPR leader sequence; Cas2 is not required in vitro. This reaction requires a 3'-OH group at the branch point. Binds ss- and dsDNA and ss- and dsRNA with approximately equal affinity. May be able to anneal complementary DNA strands. The protein is CRISPR-associated endonuclease Cas1 2 of Saccharolobus solfataricus (strain ATCC 35092 / DSM 1617 / JCM 11322 / P2) (Sulfolobus solfataricus).